A 161-amino-acid chain; its full sequence is S-ribosylhomocysteine lyase (161 aa).

Residues H57, H61, and C124 each coordinate Fe cation.

This sequence belongs to the LuxS family. In terms of assembly, homodimer. Requires Fe cation as cofactor.

The catalysed reaction is S-(5-deoxy-D-ribos-5-yl)-L-homocysteine = (S)-4,5-dihydroxypentane-2,3-dione + L-homocysteine. Functionally, involved in the synthesis of autoinducer 2 (AI-2) which is secreted by bacteria and is used to communicate both the cell density and the metabolic potential of the environment. The regulation of gene expression in response to changes in cell density is called quorum sensing. Catalyzes the transformation of S-ribosylhomocysteine (RHC) to homocysteine (HC) and 4,5-dihydroxy-2,3-pentadione (DPD). In Macrococcus caseolyticus (strain JCSC5402) (Macrococcoides caseolyticum), this protein is S-ribosylhomocysteine lyase.